The chain runs to 251 residues: Hydroxyacylglutathione hydrolase (251 aa).

Residues H53, H55, D57, H58, H110, D127, and H165 each coordinate Zn(2+).

The protein belongs to the metallo-beta-lactamase superfamily. Glyoxalase II family. As to quaternary structure, monomer. Zn(2+) is required as a cofactor.

The enzyme catalyses an S-(2-hydroxyacyl)glutathione + H2O = a 2-hydroxy carboxylate + glutathione + H(+). It functions in the pathway secondary metabolite metabolism; methylglyoxal degradation; (R)-lactate from methylglyoxal: step 2/2. Functionally, thiolesterase that catalyzes the hydrolysis of S-D-lactoyl-glutathione to form glutathione and D-lactic acid. The chain is Hydroxyacylglutathione hydrolase from Escherichia coli O9:H4 (strain HS).